The primary structure comprises 552 residues: Membrane protein insertase YidC (552 aa).

A helical membrane pass occupies residues 3–23 (TKRLILFVIFSFSILMLWDSW). Positions 29–65 (PPAASQTQTTAQSVEDGSVPQAAKSSASAANQASVPA) are disordered. 4 consecutive transmembrane segments (helical) span residues 359–379 (WGVA…PLSA), 429–449 (LPIL…LGSV), 463–483 (LSAV…MIIQ), and 503–523 (PIVF…YWLV).

This sequence belongs to the OXA1/ALB3/YidC family. Type 1 subfamily. In terms of assembly, interacts with the Sec translocase complex via SecD. Specifically interacts with transmembrane segments of nascent integral membrane proteins during membrane integration.

It localises to the cell inner membrane. Required for the insertion and/or proper folding and/or complex formation of integral membrane proteins into the membrane. Involved in integration of membrane proteins that insert both dependently and independently of the Sec translocase complex, as well as at least some lipoproteins. Aids folding of multispanning membrane proteins. This Methylobacillus flagellatus (strain ATCC 51484 / DSM 6875 / VKM B-1610 / KT) protein is Membrane protein insertase YidC.